We begin with the raw amino-acid sequence, 71 residues long: Biotinylated protein TB7.3 homolog (71 aa).

Residues 2–71 (AEDVRAEIVA…QAGHLIAVID (70 aa)) enclose the Biotinyl-binding domain. Lys37 bears the N6-biotinyllysine mark.

This chain is Biotinylated protein TB7.3 homolog, found in Mycolicibacterium smegmatis (strain ATCC 700084 / mc(2)155) (Mycobacterium smegmatis).